A 249-amino-acid chain; its full sequence is 2,3-bisphosphoglycerate-dependent phosphoglycerate mutase (249 aa).

Residues 9–16 (RHGQSQWN), 22–23 (TG), arginine 61, 88–91 (ERHY), lysine 99, 115–116 (RR), and 184–185 (GN) contribute to the substrate site. Histidine 10 acts as the Tele-phosphohistidine intermediate in catalysis. The active-site Proton donor/acceptor is the glutamate 88.

It belongs to the phosphoglycerate mutase family. BPG-dependent PGAM subfamily. Homodimer.

The enzyme catalyses (2R)-2-phosphoglycerate = (2R)-3-phosphoglycerate. Its pathway is carbohydrate degradation; glycolysis; pyruvate from D-glyceraldehyde 3-phosphate: step 3/5. In terms of biological role, catalyzes the interconversion of 2-phosphoglycerate and 3-phosphoglycerate. The protein is 2,3-bisphosphoglycerate-dependent phosphoglycerate mutase of Xanthomonas oryzae pv. oryzae (strain PXO99A).